The following is a 434-amino-acid chain: CC-adding tRNA nucleotidyltransferase (434 aa).

Residue 19 to 22 (GAVR) participates in CTP binding. Mg(2+) contacts are provided by aspartate 32 and aspartate 34. CTP-binding positions include 90 to 91 (RD), asparagine 95, 130 to 139 (DHLRSLRGVR), and arginine 175.

It belongs to the tRNA nucleotidyltransferase/poly(A) polymerase family. Mg(2+) is required as a cofactor.

It catalyses the reaction a tRNA precursor + 2 CTP = a tRNA with a 3' CC end + 2 diphosphate. TRNA nucleotidyltransferase involved in the synthesis of the tRNA CCA terminus. Adds the two cytidine residues to tRNA. This chain is CC-adding tRNA nucleotidyltransferase, found in Thermus thermophilus (strain ATCC BAA-163 / DSM 7039 / HB27).